The primary structure comprises 454 residues: Bifunctional protein GlmU (454 aa).

Positions 1–228 (MSPLHVVILA…PFEVQGVNNR (228 aa)) are pyrophosphorylase. Residues 9-12 (LAAG), Lys23, Gln74, 79-80 (GT), 101-103 (YGD), Gly138, Glu153, Asn168, and Asn226 each bind UDP-N-acetyl-alpha-D-glucosamine. Asp103 lines the Mg(2+) pocket. Mg(2+) is bound at residue Asn226. The linker stretch occupies residues 229–249 (LQLAELERWYQRQQAERLMTE). Positions 250 to 454 (GASLADPARI…IAGWERPKKA (205 aa)) are N-acetyltransferase. UDP-N-acetyl-alpha-D-glucosamine contacts are provided by Arg332 and Lys350. His362 (proton acceptor) is an active-site residue. Positions 365 and 376 each coordinate UDP-N-acetyl-alpha-D-glucosamine. Residues Ala379, 385 to 386 (NY), Ser404, Ala422, and Arg439 contribute to the acetyl-CoA site.

This sequence in the N-terminal section; belongs to the N-acetylglucosamine-1-phosphate uridyltransferase family. The protein in the C-terminal section; belongs to the transferase hexapeptide repeat family. As to quaternary structure, homotrimer. It depends on Mg(2+) as a cofactor.

It localises to the cytoplasm. It catalyses the reaction alpha-D-glucosamine 1-phosphate + acetyl-CoA = N-acetyl-alpha-D-glucosamine 1-phosphate + CoA + H(+). It carries out the reaction N-acetyl-alpha-D-glucosamine 1-phosphate + UTP + H(+) = UDP-N-acetyl-alpha-D-glucosamine + diphosphate. It functions in the pathway nucleotide-sugar biosynthesis; UDP-N-acetyl-alpha-D-glucosamine biosynthesis; N-acetyl-alpha-D-glucosamine 1-phosphate from alpha-D-glucosamine 6-phosphate (route II): step 2/2. It participates in nucleotide-sugar biosynthesis; UDP-N-acetyl-alpha-D-glucosamine biosynthesis; UDP-N-acetyl-alpha-D-glucosamine from N-acetyl-alpha-D-glucosamine 1-phosphate: step 1/1. The protein operates within bacterial outer membrane biogenesis; LPS lipid A biosynthesis. Its function is as follows. Catalyzes the last two sequential reactions in the de novo biosynthetic pathway for UDP-N-acetylglucosamine (UDP-GlcNAc). The C-terminal domain catalyzes the transfer of acetyl group from acetyl coenzyme A to glucosamine-1-phosphate (GlcN-1-P) to produce N-acetylglucosamine-1-phosphate (GlcNAc-1-P), which is converted into UDP-GlcNAc by the transfer of uridine 5-monophosphate (from uridine 5-triphosphate), a reaction catalyzed by the N-terminal domain. The sequence is that of Bifunctional protein GlmU from Marinobacter nauticus (strain ATCC 700491 / DSM 11845 / VT8) (Marinobacter aquaeolei).